We begin with the raw amino-acid sequence, 284 residues long: Bifunctional protein FolD (284 aa).

NADP(+) contacts are provided by residues 165–167 and Ser-190; that span reads GRS.

Belongs to the tetrahydrofolate dehydrogenase/cyclohydrolase family. In terms of assembly, homodimer.

The catalysed reaction is (6R)-5,10-methylene-5,6,7,8-tetrahydrofolate + NADP(+) = (6R)-5,10-methenyltetrahydrofolate + NADPH. It catalyses the reaction (6R)-5,10-methenyltetrahydrofolate + H2O = (6R)-10-formyltetrahydrofolate + H(+). It participates in one-carbon metabolism; tetrahydrofolate interconversion. Its function is as follows. Catalyzes the oxidation of 5,10-methylenetetrahydrofolate to 5,10-methenyltetrahydrofolate and then the hydrolysis of 5,10-methenyltetrahydrofolate to 10-formyltetrahydrofolate. This Streptococcus gordonii (strain Challis / ATCC 35105 / BCRC 15272 / CH1 / DL1 / V288) protein is Bifunctional protein FolD.